A 266-amino-acid chain; its full sequence is 15-hydroxyprostaglandin dehydrogenase [NAD(+)] (266 aa).

Residues Gly12–Ala20, Asp36–Trp37, Cys63–Val65, and Asn91 each bind NAD(+). Residues Ser138 and Gln148 each coordinate substrate. Residue Tyr151 is the Proton acceptor of the active site. NAD(+)-binding positions include Tyr151–Lys155 and Val186–Thr188.

Belongs to the short-chain dehydrogenases/reductases (SDR) family. As to quaternary structure, homodimer. Detected in colon epithelium (at protein level).

The protein resides in the cytoplasm. It carries out the reaction prostaglandin E2 + NAD(+) = 15-oxoprostaglandin E2 + NADH + H(+). The enzyme catalyses (15S)-hydroxy-(5Z,8Z,11Z,13E)-eicosatetraenoate + NAD(+) = 15-oxo-(5Z,8Z,11Z,13E)-eicosatetraenoate + NADH + H(+). The catalysed reaction is (11R)-hydroxy-(5Z,8Z,12E,14Z)-eicosatetraenoate + NAD(+) = 11-oxo-(5Z,8Z,12E,14Z)-eicosatetraenoate + NADH + H(+). It catalyses the reaction lipoxin A4 + NAD(+) = 15-oxo-(5S,6R)-dihydroxy-(7E,9E,11Z,13E)-eicosatetraenoate + NADH + H(+). It carries out the reaction 15-oxo-(5S,6R)-dihydroxy-(7E,9E,11Z)-eicosatrienoate + NADH + H(+) = (5S,6R,15S)-trihydroxy-(7E,9E,11Z)-eicosatrienoate + NAD(+). The enzyme catalyses prostaglandin A1 + NAD(+) = 15-oxo-prostaglandin A1 + NADH + H(+). The catalysed reaction is prostaglandin E1 + NAD(+) = 15-oxoprostaglandin E1 + NADH + H(+). It catalyses the reaction 14-hydroxy-(4Z,7Z,10Z,12E,16Z,19Z)-docosahexaenoate + NAD(+) = 14-oxo-(4Z,7Z,10Z,12E,16Z,19Z)-docosahexaenoate + NADH + H(+). It carries out the reaction resolvin E1 + NAD(+) = 18-oxo-resolvin E1 + NADH + H(+). The enzyme catalyses resolvin D1 + NAD(+) = 8-oxoresolvin D1 + NADH + H(+). The catalysed reaction is resolvin D1 + NAD(+) = 17-oxoresolvin D1 + NADH + H(+). It catalyses the reaction resolvin D2 + NAD(+) = 7-oxoresolvin D2 + NADH + H(+). It carries out the reaction resolvin D2 + NAD(+) = 16-oxoresolvin D2 + NADH + H(+). Functionally, catalyzes the NAD-dependent dehydrogenation (oxidation) of a broad array of hydroxylated polyunsaturated fatty acids (mainly eicosanoids and docosanoids, including prostaglandins, lipoxins and resolvins), yielding their corresponding keto (oxo) metabolites. Decreases the levels of the pro-proliferative prostaglandins such as prostaglandin E2 (whose activity is increased in cancer because of an increase in the expression of cyclooxygenase 2) and generates oxo-fatty acid products that can profoundly influence cell function by abrogating pro-inflammatory cytokine expression. Converts resolvins E1, D1 and D2 to their oxo products, which represents a mode of resolvin inactivation. Resolvin E1 plays important roles during the resolution phase of acute inflammation, while resolvins D1 and D2 have a unique role in obesity-induced adipose inflammation. The polypeptide is 15-hydroxyprostaglandin dehydrogenase [NAD(+)] (Homo sapiens (Human)).